The sequence spans 304 residues: Nicotinamide/nicotinic acid mononucleotide adenylyltransferase 2 (304 aa).

NAD(+) is bound by residues S16 and F17. H24 is an ATP binding site. NAD(+) is bound by residues W92 and T95. Residues C161 and C162 are each lipidated (S-palmitoyl cysteine). The NAD(+) site is built by G197, D199, L209, W210, and R229. 268-271 contributes to the ATP binding site; it reads TKSR.

This sequence belongs to the eukaryotic NMN adenylyltransferase family. Monomer. Mg(2+) serves as cofactor.

It is found in the golgi apparatus membrane. Its subcellular location is the cytoplasmic vesicle membrane. The protein localises to the cytoplasm. The protein resides in the cell projection. It localises to the axon. The enzyme catalyses beta-nicotinamide D-ribonucleotide + ATP + H(+) = diphosphate + NAD(+). It catalyses the reaction nicotinate beta-D-ribonucleotide + ATP + H(+) = deamido-NAD(+) + diphosphate. The protein operates within cofactor biosynthesis; NAD(+) biosynthesis; NAD(+) from nicotinamide D-ribonucleotide: step 1/1. It functions in the pathway cofactor biosynthesis; NAD(+) biosynthesis; deamido-NAD(+) from nicotinate D-ribonucleotide: step 1/1. Functionally, nicotinamide/nicotinate-nucleotide adenylyltransferase that acts as an axon maintenance factor. Axon survival factor required for the maintenance of healthy axons: acts by delaying Wallerian axon degeneration, an evolutionarily conserved process that drives the loss of damaged axons. Catalyzes the formation of NAD(+) from nicotinamide mononucleotide (NMN) and ATP. Can also use the deamidated form; nicotinic acid mononucleotide (NaMN) as substrate but with a lower efficiency. Also catalyzes the reverse reaction, i.e. the pyrophosphorolytic cleavage of NAD(+). For the pyrophosphorolytic activity prefers NAD(+), NADH and NaAD as substrates and degrades nicotinic acid adenine dinucleotide phosphate (NHD) less effectively. Also acts as an activator of ADP-ribosylation by supporting the catalytic activity of PARP16 and promoting mono-ADP-ribosylation of ribosomes by PARP16. May be involved in the maintenance of axonal integrity. The sequence is that of Nicotinamide/nicotinic acid mononucleotide adenylyltransferase 2 (nmnat2) from Danio rerio (Zebrafish).